Reading from the N-terminus, the 167-residue chain is Translationally-controlled tumor protein homolog (167 aa).

One can recognise a TCTP domain in the interval 1–167 (MLIYQDVLTG…WKDGLKEIKI (167 aa)).

It belongs to the TCTP family.

It localises to the cytoplasm. The protein resides in the cytoskeleton. Involved in protein synthesis. Involved in microtubule stabilization. In Cryptococcus neoformans var. neoformans serotype D (strain B-3501A) (Filobasidiella neoformans), this protein is Translationally-controlled tumor protein homolog.